A 325-amino-acid polypeptide reads, in one-letter code: Large ribosomal subunit protein uL1m (325 aa).

A mitochondrion-targeting transit peptide spans 1–50 (MAAAVRCMGRALIHHQRHSLSKMVYQTSLCSCSVNIRVPNRHFAAATKSA).

Belongs to the universal ribosomal protein uL1 family. As to quaternary structure, component of the mitochondrial large ribosomal subunit (mt-LSU). Mature mammalian 55S mitochondrial ribosomes consist of a small (28S) and a large (39S) subunit. The 28S small subunit contains a 12S ribosomal RNA (12S mt-rRNA) and 30 different proteins. The 39S large subunit contains a 16S rRNA (16S mt-rRNA), a copy of mitochondrial valine transfer RNA (mt-tRNA(Val)), which plays an integral structural role, and 52 different proteins.

The protein resides in the mitochondrion. The sequence is that of Large ribosomal subunit protein uL1m (MRPL1) from Homo sapiens (Human).